Reading from the N-terminus, the 417-residue chain is Voltage-gated potassium channel Kch (417 aa).

At 1–21 the chain is on the cytoplasmic side; it reads MSHWATFKQTATNLWVTLRHD. The chain crosses the membrane as a helical span at residues 22–41; that stretch reads ILALAVFLNGLLIFKTIYGM. The Periplasmic portion of the chain corresponds to 42-63; it reads SVNLLDIFHIKAFSELDLSLLA. The helical transmembrane segment at 64-83 threads the bilayer; that stretch reads NAPLFMLGVFLVLNSIGLLF. At 84–86 the chain is on the cytoplasmic side; sequence RAK. The chain crosses the membrane as a helical span at residues 87-104; the sequence is LAWAISIILLLIALIYTL. Over 105-110 the chain is Periplasmic; it reads HFYPWL. Residues 111–127 traverse the membrane as a helical segment; it reads KFSIGFCIFTLVFLLIL. Residues 128-140 lie on the Cytoplasmic side of the membrane; it reads RKDFSHSSAAAGT. Residues 141-160 form a helical membrane-spanning segment; sequence IFAFISFTTLLFYSTYGALY. The Periplasmic segment spans residues 161–199; that stretch reads LSEGFNPRIESLMTAFYFSIETMSTVGYGDIVPVSESAR. The Selectivity filter signature appears at 185-190; sequence TVGYGD. The helical transmembrane segment at 200–220 threads the bilayer; that stretch reads LFTISVIISGITVFATSMTSI. At 221-417 the chain is on the cytoplasmic side; that stretch reads FGPLIRGGFN…KADSKESAQK (197 aa). An RCK N-terminal domain is found at 243–363; the sequence is KDHFIVCGHS…IKMVHPDIIL (121 aa).

Belongs to the potassium channel family. In terms of assembly, dimer.

It localises to the cell inner membrane. Its function is as follows. K(+)-specific ion channel. May play a role in the defense against osmotic shock. In Escherichia coli (strain K12), this protein is Voltage-gated potassium channel Kch (kch).